The sequence spans 124 residues: Holo-[acyl-carrier-protein] synthase (124 aa).

Positions 8 and 55 each coordinate Mg(2+).

Belongs to the P-Pant transferase superfamily. AcpS family. Mg(2+) is required as a cofactor.

The protein resides in the cytoplasm. The enzyme catalyses apo-[ACP] + CoA = holo-[ACP] + adenosine 3',5'-bisphosphate + H(+). Functionally, transfers the 4'-phosphopantetheine moiety from coenzyme A to a Ser of acyl-carrier-protein. The polypeptide is Holo-[acyl-carrier-protein] synthase (Desulfovibrio desulfuricans (strain ATCC 27774 / DSM 6949 / MB)).